The chain runs to 510 residues: MRSSQTLSKYIDKATDQFNLEPNLALNIEIADLINEKKGNTPREAALLILKRVNSANPTVSYLALHLLDICVKNCGYPFHFQIASEEFLNGFVSRFPNHPISRMNKIQSKMLEMLEEWNYMLCKNNRHREDFSRIHDIRELMAFRGYKFPAVDEDSIAVMKPNNSLRSAQELAREDLEAHKAKLQELLRRGTPMDLAEANALMKVIAGYDEENTEDYSALAAADLESIRSKALRVKQFLVNQTVSLEEGTLADAVESLKVYQTKIARILREENEDEYYVQKLLSLNDLLINVIEECSNSDLIHSGTNVVSSQPNVVESHVPPSSNDTKQESSLIDLMKLTEEPAVPSPSLPTNVPANQSLSMLSSLSNSMSSTSNGALNSPSYSQAAIPNTNSSLTSILQSDSLMISTQLTSVQKSSGFASYSVQFSNCSLTWPVSEVVFQVAVVKSLKLQLLPHTGDAIIAPGKQNAAHEIMNITNIPADASDLRIRWRVQWIIGTDHRVEQGESHLPL.

The VHS domain occupies 14–150 (ATDQFNLEPN…LMAFRGYKFP (137 aa)). The region spanning 177-301 (LEAHKAKLQE…VIEECSNSDL (125 aa)) is the GAT domain. The GAE domain maps to 391-510 (TNSSLTSILQ…VEQGESHLPL (120 aa)).

It localises to the golgi apparatus. Its subcellular location is the trans-Golgi network. In terms of biological role, may play a role in the regulation of membrane traffic through the trans-Golgi network. The sequence is that of Probable ADP-ribosylation factor-binding protein C1F3.05 from Schizosaccharomyces pombe (strain 972 / ATCC 24843) (Fission yeast).